A 199-amino-acid chain; its full sequence is Thymidine kinase (199 aa).

ATP-binding positions include 23 to 30 and 95 to 98; these read GSMFSGKT and DEAQ. E96 (proton acceptor) is an active-site residue. Zn(2+) contacts are provided by C152, C155, C184, and C187.

This sequence belongs to the thymidine kinase family. Homotetramer.

The protein localises to the cytoplasm. The catalysed reaction is thymidine + ATP = dTMP + ADP + H(+). The chain is Thymidine kinase from Bacteroides fragilis (strain YCH46).